The sequence spans 569 residues: Sulfite reductase [NADPH] hemoprotein beta-component (569 aa).

The [4Fe-4S] cluster site is built by C434, C440, C479, and C483. Residue C483 participates in siroheme binding.

It belongs to the nitrite and sulfite reductase 4Fe-4S domain family. Alpha(8)-beta(8). The alpha component is a flavoprotein, the beta component is a hemoprotein. Siroheme is required as a cofactor. It depends on [4Fe-4S] cluster as a cofactor.

The enzyme catalyses hydrogen sulfide + 3 NADP(+) + 3 H2O = sulfite + 3 NADPH + 4 H(+). It functions in the pathway sulfur metabolism; hydrogen sulfide biosynthesis; hydrogen sulfide from sulfite (NADPH route): step 1/1. Its function is as follows. Component of the sulfite reductase complex that catalyzes the 6-electron reduction of sulfite to sulfide. This is one of several activities required for the biosynthesis of L-cysteine from sulfate. In Staphylococcus carnosus (strain TM300), this protein is Sulfite reductase [NADPH] hemoprotein beta-component.